Here is a 212-residue protein sequence, read N- to C-terminus: Proteasome subunit beta 2 (212 aa).

Positions 1 to 15 are cleaved as a propeptide — removed in mature form; by autocatalysis; sequence MLHHPGTGQLRALKG. Threonine 16 (nucleophile) is an active-site residue.

It belongs to the peptidase T1B family. As to quaternary structure, the 20S proteasome core is composed of 14 alpha and 14 beta subunits that assemble into four stacked heptameric rings, resulting in a barrel-shaped structure. The two inner rings, each composed of seven catalytic beta subunits, are sandwiched by two outer rings, each composed of seven alpha subunits. The catalytic chamber with the active sites is on the inside of the barrel. Has a gated structure, the ends of the cylinder being occluded by the N-termini of the alpha-subunits. Is capped at one or both ends by the proteasome regulatory ATPase, PAN.

It localises to the cytoplasm. The catalysed reaction is Cleavage of peptide bonds with very broad specificity.. The formation of the proteasomal ATPase PAN-20S proteasome complex, via the docking of the C-termini of PAN into the intersubunit pockets in the alpha-rings, triggers opening of the gate for substrate entry. Interconversion between the open-gate and close-gate conformations leads to a dynamic regulation of the 20S proteasome proteolysis activity. Functionally, component of the proteasome core, a large protease complex with broad specificity involved in protein degradation. This chain is Proteasome subunit beta 2, found in Hyperthermus butylicus (strain DSM 5456 / JCM 9403 / PLM1-5).